The following is a 175-amino-acid chain: Crossover junction endodeoxyribonuclease RuvC (175 aa).

Active-site residues include Asp8, Glu69, and Asp141. Mg(2+) contacts are provided by Asp8, Glu69, and Asp141.

This sequence belongs to the RuvC family. In terms of assembly, homodimer which binds Holliday junction (HJ) DNA. The HJ becomes 2-fold symmetrical on binding to RuvC with unstacked arms; it has a different conformation from HJ DNA in complex with RuvA. In the full resolvosome a probable DNA-RuvA(4)-RuvB(12)-RuvC(2) complex forms which resolves the HJ. Mg(2+) is required as a cofactor.

Its subcellular location is the cytoplasm. The enzyme catalyses Endonucleolytic cleavage at a junction such as a reciprocal single-stranded crossover between two homologous DNA duplexes (Holliday junction).. In terms of biological role, the RuvA-RuvB-RuvC complex processes Holliday junction (HJ) DNA during genetic recombination and DNA repair. Endonuclease that resolves HJ intermediates. Cleaves cruciform DNA by making single-stranded nicks across the HJ at symmetrical positions within the homologous arms, yielding a 5'-phosphate and a 3'-hydroxyl group; requires a central core of homology in the junction. The consensus cleavage sequence is 5'-(A/T)TT(C/G)-3'. Cleavage occurs on the 3'-side of the TT dinucleotide at the point of strand exchange. HJ branch migration catalyzed by RuvA-RuvB allows RuvC to scan DNA until it finds its consensus sequence, where it cleaves and resolves the cruciform DNA. The polypeptide is Crossover junction endodeoxyribonuclease RuvC (Colwellia psychrerythraea (strain 34H / ATCC BAA-681) (Vibrio psychroerythus)).